A 110-amino-acid polypeptide reads, in one-letter code: Large ribosomal subunit protein uL22 (110 aa).

It belongs to the universal ribosomal protein uL22 family. In terms of assembly, part of the 50S ribosomal subunit.

This protein binds specifically to 23S rRNA; its binding is stimulated by other ribosomal proteins, e.g. L4, L17, and L20. It is important during the early stages of 50S assembly. It makes multiple contacts with different domains of the 23S rRNA in the assembled 50S subunit and ribosome. Functionally, the globular domain of the protein is located near the polypeptide exit tunnel on the outside of the subunit, while an extended beta-hairpin is found that lines the wall of the exit tunnel in the center of the 70S ribosome. The polypeptide is Large ribosomal subunit protein uL22 (Idiomarina loihiensis (strain ATCC BAA-735 / DSM 15497 / L2-TR)).